The following is a 130-amino-acid chain: Histone H2A type 1-K (130 aa).

The segment at 1-22 is disordered; it reads MSGRGKQGGKARAKAKTRSSRA. The residue at position 2 (Ser2) is an N-acetylserine. Ser2 bears the Phosphoserine; by RPS6KA5 mark. Citrulline; alternate is present on Arg4. Position 4 is a symmetric dimethylarginine; by PRMT5; alternate (Arg4). N6-(2-hydroxyisobutyryl)lysine; alternate is present on residues Lys6 and Lys10. Lys6 is subject to N6-(beta-hydroxybutyryl)lysine; alternate. N6-acetyllysine; alternate is present on residues Lys6 and Lys10. Residues 7–19 show a composition bias toward basic residues; it reads QGGKARAKAKTRS. Lys10 carries the post-translational modification N6-lactoyllysine; alternate. Position 10 is an N6-succinyllysine; alternate (Lys10). Residues Lys14 and Lys16 each participate in a glycyl lysine isopeptide (Lys-Gly) (interchain with G-Cter in ubiquitin) cross-link. An N6-(2-hydroxyisobutyryl)lysine; alternate modification is found at Lys37. The residue at position 37 (Lys37) is an N6-(beta-hydroxybutyryl)lysine; alternate. At Lys37 the chain carries N6-crotonyllysine; alternate. N6-(2-hydroxyisobutyryl)lysine is present on residues Lys75 and Lys76. An N6-(2-hydroxyisobutyryl)lysine; alternate modification is found at Lys96. An N6-succinyllysine; alternate modification is found at Lys96. Lys96 is subject to N6-glutaryllysine; alternate. At Gln105 the chain carries N5-methylglutamine. Lys119 is subject to N6-(2-hydroxyisobutyryl)lysine; alternate. An N6-crotonyllysine; alternate mark is found at Lys119 and Lys120. N6-glutaryllysine; alternate occurs at positions 119 and 120. The residue at position 120 (Lys120) is an N6-(beta-hydroxybutyryl)lysine; alternate. A Glycyl lysine isopeptide (Lys-Gly) (interchain with G-Cter in ubiquitin); alternate cross-link involves residue Lys120. At Thr121 the chain carries Phosphothreonine; by DCAF1. Lys126 carries the post-translational modification N6-(beta-hydroxybutyryl)lysine; alternate. Lys126 is modified (N6-crotonyllysine; alternate). Lys126 carries the N6-glutaryllysine; alternate modification.

The protein belongs to the histone H2A family. The nucleosome is a histone octamer containing two molecules each of H2A, H2B, H3 and H4 assembled in one H3-H4 heterotetramer and two H2A-H2B heterodimers. The octamer wraps approximately 147 bp of DNA. Deiminated on Arg-4 in granulocytes upon calcium entry. In terms of processing, monoubiquitination of Lys-120 (H2AK119Ub) by RING1, TRIM37 and RNF2/RING2 complex gives a specific tag for epigenetic transcriptional repression and participates in X chromosome inactivation of female mammals. It is involved in the initiation of both imprinted and random X inactivation. Ubiquitinated H2A is enriched in inactive X chromosome chromatin. Ubiquitination of H2A functions downstream of methylation of 'Lys-27' of histone H3 (H3K27me). H2AK119Ub by RNF2/RING2 can also be induced by ultraviolet and may be involved in DNA repair. Following DNA double-strand breaks (DSBs), it is ubiquitinated through 'Lys-63' linkage of ubiquitin moieties by the E2 ligase UBE2N and the E3 ligases RNF8 and RNF168, leading to the recruitment of repair proteins to sites of DNA damage. Ubiquitination at Lys-14 and Lys-16 (H2AK13Ub and H2AK15Ub, respectively) in response to DNA damage is initiated by RNF168 that mediates monoubiquitination at these 2 sites, and 'Lys-63'-linked ubiquitin are then conjugated to monoubiquitin; RNF8 is able to extend 'Lys-63'-linked ubiquitin chains in vitro. Deubiquitinated by USP51 at Lys-14 and Lys-16 (H2AK13Ub and H2AK15Ub, respectively) after damaged DNA is repaired. H2AK119Ub and ionizing radiation-induced 'Lys-63'-linked ubiquitination (H2AK13Ub and H2AK15Ub) are distinct events. Post-translationally, phosphorylation on Ser-2 (H2AS1ph) is enhanced during mitosis. Phosphorylation on Ser-2 by RPS6KA5/MSK1 directly represses transcription. Acetylation of H3 inhibits Ser-2 phosphorylation by RPS6KA5/MSK1. Phosphorylation at Thr-121 (H2AT120ph) by DCAF1 is present in the regulatory region of many tumor suppresor genes and down-regulates their transcription. Symmetric dimethylation on Arg-4 by the PRDM1/PRMT5 complex may play a crucial role in the germ-cell lineage. In terms of processing, glutamine methylation at Gln-105 (H2AQ104me) by FBL is specifically dedicated to polymerase I. It is present at 35S ribosomal DNA locus and impairs binding of the FACT complex. Post-translationally, crotonylation (Kcr) is specifically present in male germ cells and marks testis-specific genes in post-meiotic cells, including X-linked genes that escape sex chromosome inactivation in haploid cells. Crotonylation marks active promoters and enhancers and confers resistance to transcriptional repressors. It is also associated with post-meiotically activated genes on autosomes. Hydroxybutyrylation of histones is induced by starvation. In terms of processing, lactylated in macrophages by EP300/P300 by using lactoyl-CoA directly derived from endogenous or exogenous lactate, leading to stimulates gene transcription.

The protein localises to the nucleus. The protein resides in the chromosome. Its function is as follows. Core component of nucleosome. Nucleosomes wrap and compact DNA into chromatin, limiting DNA accessibility to the cellular machineries which require DNA as a template. Histones thereby play a central role in transcription regulation, DNA repair, DNA replication and chromosomal stability. DNA accessibility is regulated via a complex set of post-translational modifications of histones, also called histone code, and nucleosome remodeling. The polypeptide is Histone H2A type 1-K (Mus musculus (Mouse)).